A 211-amino-acid polypeptide reads, in one-letter code: Ribonuclease T (211 aa).

Residues 24–198 enclose the Exonuclease domain; the sequence is VVVDVETGGF…YDAEKTAHLF (175 aa). Positions 27, 29, 185, and 190 each coordinate Mg(2+). H185 (proton donor/acceptor) is an active-site residue.

It belongs to the RNase T family. Homodimer. Mg(2+) is required as a cofactor.

Functionally, trims short 3' overhangs of a variety of RNA species, leaving a one or two nucleotide 3' overhang. Responsible for the end-turnover of tRNA: specifically removes the terminal AMP residue from uncharged tRNA (tRNA-C-C-A). Also appears to be involved in tRNA biosynthesis. This is Ribonuclease T from Xylella fastidiosa (strain 9a5c).